The sequence spans 711 residues: Angiogenic factor with G patch and FHA domains 1 (711 aa).

A compositionally biased stretch (pro residues) spans 1-19 (MASEAPSPPSPSPPPPASP). Disordered regions lie at residues 1–23 (MASE…EPEL), 137–184 (ALDP…EGPA), 260–297 (PYQT…SEDQ), and 311–400 (EHSG…EDEE). Ala2 carries the N-acetylalanine modification. A phosphoserine mark is found at Ser7 and Ser12. Residues 19-85 (PEPELAQLRR…SKILHCGKNE (67 aa)) are a coiled coil. Polar residues predominate over residues 167-176 (AVTSDSQESV). The segment covering 270–279 (RERRLKKRRK) has biased composition (basic residues). Basic and acidic residues predominate over residues 287-297 (NEEKDLSSEDQ). Ser344 carries the post-translational modification Phosphoserine. The span at 361–370 (SESEPEEGEI) shows a compositional bias: acidic residues. Basic and acidic residues predominate over residues 374–391 (QSEKSYDGDSSSGDRETS). The FHA domain occupies 431–484 (ATIGREKDMEHTVRIPEVAVSKFHAEVYFDHDLQSYVLVDQGSQNGTIVNGKQI). Basic and acidic residues-rich tracts occupy residues 579-606 (LKNP…RDDA) and 613-623 (EITDSNKGRKM). Residues 579-623 (LKNPKYKDRAGKRREQVGSEGTFQRDDAPASVHSEITDSNKGRKM) are disordered. The G-patch domain maps to 616–662 (DSNKGRKMLEKMGWKRGEGLGKDGGGMKTPIQLQLRRTHAGLGTGKL). An N6-acetyllysine modification is found at Lys661. The segment covering 690–699 (FTENKPRKET) has biased composition (basic and acidic residues). The interval 690–711 (FTENKPRKETPGAVPWVTGTAE) is disordered.

In terms of assembly, interacts with the secreted angiogenic factor TNFSF12.

The protein resides in the cytoplasm. The protein localises to the secreted. In terms of biological role, promotes angiogenesis and the proliferation of endothelial cells. Able to bind to endothelial cells and promote cell proliferation, suggesting that it may act in an autocrine fashion. The sequence is that of Angiogenic factor with G patch and FHA domains 1 (Aggf1) from Mus musculus (Mouse).